We begin with the raw amino-acid sequence, 280 residues long: 2-dehydro-3-deoxyphosphooctonate aldolase (280 aa).

Belongs to the KdsA family.

It is found in the cytoplasm. The catalysed reaction is D-arabinose 5-phosphate + phosphoenolpyruvate + H2O = 3-deoxy-alpha-D-manno-2-octulosonate-8-phosphate + phosphate. Its pathway is carbohydrate biosynthesis; 3-deoxy-D-manno-octulosonate biosynthesis; 3-deoxy-D-manno-octulosonate from D-ribulose 5-phosphate: step 2/3. The protein operates within bacterial outer membrane biogenesis; lipopolysaccharide biosynthesis. The sequence is that of 2-dehydro-3-deoxyphosphooctonate aldolase from Neisseria meningitidis serogroup B (strain ATCC BAA-335 / MC58).